The following is a 385-amino-acid chain: Putative nickel insertion protein (385 aa).

Belongs to the LarC family.

This is Putative nickel insertion protein from Geobacter sp. (strain M21).